Reading from the N-terminus, the 129-residue chain is UPF0225 protein XC_4246 (129 aa).

The protein belongs to the UPF0225 family.

The chain is UPF0225 protein XC_4246 from Xanthomonas campestris pv. campestris (strain 8004).